We begin with the raw amino-acid sequence, 364 residues long: UDP-N-acetylglucosamine--N-acetylmuramyl-(pentapeptide) pyrophosphoryl-undecaprenol N-acetylglucosamine transferase (364 aa).

UDP-N-acetyl-alpha-D-glucosamine contacts are provided by residues 10–12, Asn-128, Arg-170, Ser-199, Ile-250, and Gln-295; that span reads TGG.

The protein belongs to the glycosyltransferase 28 family. MurG subfamily.

The protein resides in the cell inner membrane. The enzyme catalyses di-trans,octa-cis-undecaprenyl diphospho-N-acetyl-alpha-D-muramoyl-L-alanyl-D-glutamyl-meso-2,6-diaminopimeloyl-D-alanyl-D-alanine + UDP-N-acetyl-alpha-D-glucosamine = di-trans,octa-cis-undecaprenyl diphospho-[N-acetyl-alpha-D-glucosaminyl-(1-&gt;4)]-N-acetyl-alpha-D-muramoyl-L-alanyl-D-glutamyl-meso-2,6-diaminopimeloyl-D-alanyl-D-alanine + UDP + H(+). It functions in the pathway cell wall biogenesis; peptidoglycan biosynthesis. Its function is as follows. Cell wall formation. Catalyzes the transfer of a GlcNAc subunit on undecaprenyl-pyrophosphoryl-MurNAc-pentapeptide (lipid intermediate I) to form undecaprenyl-pyrophosphoryl-MurNAc-(pentapeptide)GlcNAc (lipid intermediate II). This Chlorobium phaeobacteroides (strain DSM 266 / SMG 266 / 2430) protein is UDP-N-acetylglucosamine--N-acetylmuramyl-(pentapeptide) pyrophosphoryl-undecaprenol N-acetylglucosamine transferase.